We begin with the raw amino-acid sequence, 534 residues long: Protein tweety homolog 2 (534 aa).

The Extracellular segment spans residues 1–44 (MATARVEYIAPWWVYWLHNLPHVDFSLQRESGDFNPKDPGYQQT). Residues 45-65 (LLFVALFIALCAAVNLLFVSG) form a helical membrane-spanning segment. The Cytoplasmic segment spans residues 66-87 (YLICLCCCKKEDETETKMTSSC). A helical transmembrane segment spans residues 88 to 108 (CVTWTAAVSGLLCCAAVGIGF). Residues 109-213 (YGNSETNDGV…NASIIEYYRW (105 aa)) are Extracellular-facing. Positions 113 and 116 each coordinate Ca(2+). Residue Asn-129 is glycosylated (N-linked (GlcNAc...) asparagine). Residues 164–166 (RGD) carry the RGD motif. Asn-197 and Asn-204 each carry an N-linked (GlcNAc...) asparagine glycan. Residues 214 to 234 (LSYLILFITDVVICLVTCLGL) form a helical membrane-spanning segment. Residues 235-240 (AKKSKC) lie on the Cytoplasmic side of the membrane. The chain crosses the membrane as a helical span at residues 241 to 261 (LLLTMLCCGLIALMLSWASLA). The Extracellular segment spans residues 262-388 (LETSSAVGTS…IGICYDGVEG (127 aa)). Disulfide bonds link Cys-274–Cys-382 and Cys-300–Cys-367. N-linked (GlcNAc...) asparagine glycosylation is present at Asn-352. The helical transmembrane segment at 389 to 409 (LLYLSLFSLLAAVAFTAMVCA) threads the bilayer. At 410-534 (MPRAWKHLAA…PNIYSNVFPA (125 aa)) the chain is on the cytoplasmic side.

This sequence belongs to the tweety family. As to quaternary structure, forms cis-homodimers in the presence of Ca(+2) and forms monomers and trans-dimers in the absence of Ca(2+).

The protein localises to the cell membrane. It carries out the reaction chloride(in) = chloride(out). The catalysed reaction is L-glutamate(out) = L-glutamate(in). In terms of biological role, may act as a calcium-independent, swelling-dependent volume-regulated anion channel (VRAC-swell) which plays a pivotal role in the process of regulatory volume decrease (RVD) in the brain through the efflux of anions like chloride and organic osmolytes like glutamate. Probable large-conductance Ca(2+)-activated chloride channel. This Xenopus laevis (African clawed frog) protein is Protein tweety homolog 2 (ttyh2).